Consider the following 475-residue polypeptide: tRNA-2-methylthio-N(6)-dimethylallyladenosine synthase (475 aa).

The MTTase N-terminal domain maps to Ala-2–Ser-119. [4Fe-4S] cluster is bound by residues Cys-11, Cys-48, Cys-82, Cys-156, Cys-160, and Cys-163. The 233-residue stretch at Lys-142 to Gln-374 folds into the Radical SAM core domain. One can recognise a TRAM domain in the interval Arg-377–Arg-440.

It belongs to the methylthiotransferase family. MiaB subfamily. Monomer. It depends on [4Fe-4S] cluster as a cofactor.

The protein localises to the cytoplasm. It carries out the reaction N(6)-dimethylallyladenosine(37) in tRNA + (sulfur carrier)-SH + AH2 + 2 S-adenosyl-L-methionine = 2-methylsulfanyl-N(6)-dimethylallyladenosine(37) in tRNA + (sulfur carrier)-H + 5'-deoxyadenosine + L-methionine + A + S-adenosyl-L-homocysteine + 2 H(+). In terms of biological role, catalyzes the methylthiolation of N6-(dimethylallyl)adenosine (i(6)A), leading to the formation of 2-methylthio-N6-(dimethylallyl)adenosine (ms(2)i(6)A) at position 37 in tRNAs that read codons beginning with uridine. This chain is tRNA-2-methylthio-N(6)-dimethylallyladenosine synthase, found in Haemophilus ducreyi (strain 35000HP / ATCC 700724).